The chain runs to 245 residues: tRNA (guanine-N(7)-)-methyltransferase (245 aa).

S-adenosyl-L-methionine-binding positions include G70, 93–94 (EI), 126–127 (NA), and L146. The active site involves D149. An S-adenosyl-L-methionine-binding site is contributed by 224-226 (SEE).

The protein belongs to the class I-like SAM-binding methyltransferase superfamily. TrmB family.

The protein resides in the nucleus. The catalysed reaction is guanosine(46) in tRNA + S-adenosyl-L-methionine = N(7)-methylguanosine(46) in tRNA + S-adenosyl-L-homocysteine. Its pathway is tRNA modification; N(7)-methylguanine-tRNA biosynthesis. Functionally, catalyzes the formation of N(7)-methylguanine at position 46 (m7G46) in tRNA. In Aedes aegypti (Yellowfever mosquito), this protein is tRNA (guanine-N(7)-)-methyltransferase.